The sequence spans 390 residues: Galactokinase (390 aa).

Position 33 to 36 (33 to 36 (EHTD)) interacts with substrate. ATP contacts are provided by residues S67 and 124-130 (GAGLSSS). Residues S130 and E162 each coordinate Mg(2+). The Proton acceptor role is filled by D174. A substrate-binding site is contributed by Y224.

The protein belongs to the GHMP kinase family. GalK subfamily.

Its subcellular location is the cytoplasm. It carries out the reaction alpha-D-galactose + ATP = alpha-D-galactose 1-phosphate + ADP + H(+). It functions in the pathway carbohydrate metabolism; galactose metabolism. Catalyzes the transfer of the gamma-phosphate of ATP to D-galactose to form alpha-D-galactose-1-phosphate (Gal-1-P). This chain is Galactokinase, found in Exiguobacterium sibiricum (strain DSM 17290 / CCUG 55495 / CIP 109462 / JCM 13490 / 255-15).